The primary structure comprises 734 residues: Polyribonucleotide nucleotidyltransferase (734 aa).

Residues aspartate 505 and aspartate 511 each coordinate Mg(2+). One can recognise a KH domain in the interval 572 to 631 (PKLTTIQIPVDAIGMVIGKGGETIRSITEETGAEINIEDDGTVTIASASGEGASAALETI). One can recognise an S1 motif domain in the interval 641-715 (GTVYSGKVRD…GKTRFALSIK (75 aa)).

It belongs to the polyribonucleotide nucleotidyltransferase family. Mg(2+) is required as a cofactor.

Its subcellular location is the cytoplasm. The catalysed reaction is RNA(n+1) + phosphate = RNA(n) + a ribonucleoside 5'-diphosphate. Functionally, involved in mRNA degradation. Catalyzes the phosphorolysis of single-stranded polyribonucleotides processively in the 3'- to 5'-direction. This is Polyribonucleotide nucleotidyltransferase from Prosthecochloris aestuarii (strain DSM 271 / SK 413).